The following is a 147-amino-acid chain: Monothiol glutaredoxin-S5 (147 aa).

Residues 49-146 (AAEVRRAVAE…PILKKAGALW (98 aa)) form the Glutaredoxin domain. C69 contacts [2Fe-2S] cluster. A Responsive for interaction with TGA factors motif is present at residues 144-147 (ALWL).

The protein belongs to the glutaredoxin family. CC-type subfamily.

Its subcellular location is the cytoplasm. The protein localises to the nucleus. Functionally, may only reduce GSH-thiol disulfides, but not protein disulfides. The protein is Monothiol glutaredoxin-S5 (GRXS5) of Oryza sativa subsp. japonica (Rice).